We begin with the raw amino-acid sequence, 308 residues long: Olfactory receptor 5H19 (308 aa).

Residues 1 to 27 lie on the Extracellular side of the membrane; the sequence is MEKNATLLTEFVLTGLSHQPLWNIPLF. A glycan (N-linked (GlcNAc...) asparagine) is linked at asparagine 4. Residues 28-48 form a helical membrane-spanning segment; it reads LVFLVIYLITIVGNVSLITLI. The Cytoplasmic segment spans residues 49-55; that stretch reads WTDPHLH. A helical transmembrane segment spans residues 56 to 76; that stretch reads IPMYLFLGSLAFVDTSISSIV. The Extracellular segment spans residues 77-92; the sequence is VPKMLLNFFGKSKVIT. A helical transmembrane segment spans residues 93 to 113; sequence LSECMAQFFLFNISATTECFL. Cysteine 96 and cysteine 188 are oxidised to a cystine. Over 114–143 the chain is Cytoplasmic; it reads LAAMAYDRYVAICKPLLYPVVMTNGLCVWL. A helical transmembrane segment spans residues 144 to 164; it reads IALSFVAGIIHALIHEGFLLR. Topologically, residues 165-197 are extracellular; sequence LTFCNSNMIHNFYCDIISLLKISCTDTSLNYLI. A helical transmembrane segment spans residues 198 to 218; it reads VFIFSGSIQVFTISTILVSYT. At 219-238 the chain is on the cytoplasmic side; the sequence is IILFTILKKKSAKGIKKAFS. The chain crosses the membrane as a helical span at residues 239-259; it reads TCGAHLLSVSLYYGPLLFMYV. Over 260–270 the chain is Extracellular; the sequence is HPASSEVDDQD. A helical transmembrane segment spans residues 271-291; it reads MIDSLFYTVIIPVLNPIIYSL. Residues 292 to 308 are Cytoplasmic-facing; sequence RNKQVIDSLAKFLKRNV.

It belongs to the G-protein coupled receptor 1 family.

It is found in the cell membrane. Functionally, potential odorant receptor. The chain is Olfactory receptor 5H19 from Mus musculus (Mouse).